A 212-amino-acid polypeptide reads, in one-letter code: HTH-type transcriptional repressor NicS (212 aa).

An HTH tetR-type domain is found at 14 to 74 (DRTRDNILKA…SVLEHIYASF (61 aa)). The segment at residues 37–56 (RIEQISTLAKSNDRMIYYYF) is a DNA-binding region (H-T-H motif).

The protein operates within cofactor degradation; nicotinate degradation [regulation]. Transcriptional repressor for the nicAB operon, encoding the upper aerobic nicotinate degradation pathway. Acts under non-induced conditions: repression of the nicAB operon becomes alleviated in presence of either nicotinate or 6-hydroxynicotinate (6HNA). This Pseudomonas putida (strain ATCC 47054 / DSM 6125 / CFBP 8728 / NCIMB 11950 / KT2440) protein is HTH-type transcriptional repressor NicS (nicS).